Here is a 78-residue protein sequence, read N- to C-terminus: RNA-binding protein Hfq (78 aa).

One can recognise a Sm domain in the interval Asp-10–Val-69.

Belongs to the Hfq family. As to quaternary structure, homohexamer.

Its function is as follows. RNA chaperone that binds small regulatory RNA (sRNAs) and mRNAs to facilitate mRNA translational regulation in response to envelope stress, environmental stress and changes in metabolite concentrations. Also binds with high specificity to tRNAs. This chain is RNA-binding protein Hfq, found in Janthinobacterium sp. (strain Marseille) (Minibacterium massiliensis).